The following is a 315-amino-acid chain: tRNA dimethylallyltransferase (315 aa).

10–17 is an ATP binding site; that stretch reads GPTATGKS. Substrate is bound at residue 12 to 17; the sequence is TATGKS. The tract at residues 35-38 is interaction with substrate tRNA; sequence DSMQ.

This sequence belongs to the IPP transferase family. Monomer. Requires Mg(2+) as cofactor.

It carries out the reaction adenosine(37) in tRNA + dimethylallyl diphosphate = N(6)-dimethylallyladenosine(37) in tRNA + diphosphate. In terms of biological role, catalyzes the transfer of a dimethylallyl group onto the adenine at position 37 in tRNAs that read codons beginning with uridine, leading to the formation of N6-(dimethylallyl)adenosine (i(6)A). The chain is tRNA dimethylallyltransferase from Caldanaerobacter subterraneus subsp. tengcongensis (strain DSM 15242 / JCM 11007 / NBRC 100824 / MB4) (Thermoanaerobacter tengcongensis).